Here is a 497-residue protein sequence, read N- to C-terminus: Cytochrome P450 2D6 (497 aa).

Asp301 provides a ligand contact to substrate. Cys443 provides a ligand contact to heme.

It belongs to the cytochrome P450 family. Heme serves as cofactor.

Its subcellular location is the endoplasmic reticulum membrane. It is found in the microsome membrane. It carries out the reaction (5Z,8Z,11Z,14Z)-eicosatetraenoate + reduced [NADPH--hemoprotein reductase] + O2 = (8R,9S)-epoxy-(5Z,11Z,14Z)-eicosatrienoate + oxidized [NADPH--hemoprotein reductase] + H2O + H(+). The enzyme catalyses (5Z,8Z,11Z,14Z)-eicosatetraenoate + reduced [NADPH--hemoprotein reductase] + O2 = (11R,12S)-epoxy-(5Z,8Z,14Z)-eicosatrienoate + oxidized [NADPH--hemoprotein reductase] + H2O + H(+). It catalyses the reaction (5Z,8Z,11Z,14Z)-eicosatetraenoate + reduced [NADPH--hemoprotein reductase] + O2 = (14S,15R)-epoxy-(5Z,8Z,11Z)-eicosatrienoate + oxidized [NADPH--hemoprotein reductase] + H2O + H(+). The catalysed reaction is N-(5Z,8Z,11Z,14Z-eicosatetraenoyl)-ethanolamine + reduced [NADPH--hemoprotein reductase] + O2 = N-(8,9-epoxy-5Z,11Z,14Z-eicosatrienoyl)-ethanolamine + oxidized [NADPH--hemoprotein reductase] + H2O + H(+). It carries out the reaction N-(5Z,8Z,11Z,14Z-eicosatetraenoyl)-ethanolamine + reduced [NADPH--hemoprotein reductase] + O2 = N-(11,12-epoxy-5Z,8Z,14Z-eicosatrienoyl)-ethanolamine + oxidized [NADPH--hemoprotein reductase] + H2O + H(+). The enzyme catalyses N-(5Z,8Z,11Z,14Z-eicosatetraenoyl)-ethanolamine + reduced [NADPH--hemoprotein reductase] + O2 = N-(14,15-epoxy-5Z,8Z,11Z-eicosatrienoyl)-ethanolamine + oxidized [NADPH--hemoprotein reductase] + H2O + H(+). It catalyses the reaction N-(5Z,8Z,11Z,14Z-eicosatetraenoyl)-ethanolamine + reduced [NADPH--hemoprotein reductase] + O2 = N-(20-hydroxy-5Z,8Z,11Z,14Z-eicosatetraenoyl)-ethanolamine + oxidized [NADPH--hemoprotein reductase] + H2O + H(+). The catalysed reaction is (5Z,8Z,11Z,14Z,17Z)-eicosapentaenoate + reduced [NADPH--hemoprotein reductase] + O2 = (17S,18R)-epoxy-(5Z,8Z,11Z,14Z)-eicosatetraenoate + oxidized [NADPH--hemoprotein reductase] + H2O + H(+). It carries out the reaction (4Z,7Z,10Z,13Z,16Z,19Z)-docosahexaenoate + reduced [NADPH--hemoprotein reductase] + O2 = (19R,20S)-epoxy-(4Z,7Z,10Z,13Z,16Z)-docosapentaenoate + oxidized [NADPH--hemoprotein reductase] + H2O + H(+). The enzyme catalyses (4Z,7Z,10Z,13Z,16Z,19Z)-docosahexaenoate + reduced [NADPH--hemoprotein reductase] + O2 = (19S,20R)-epoxy-(4Z,7Z,10Z,13Z,16Z)-docosapentaenoate + oxidized [NADPH--hemoprotein reductase] + H2O + H(+). It catalyses the reaction cholesterol + reduced [NADPH--hemoprotein reductase] + O2 = 25-hydroxycholesterol + oxidized [NADPH--hemoprotein reductase] + H2O + H(+). The catalysed reaction is all-trans-retinol + reduced [NADPH--hemoprotein reductase] + O2 = all-trans-retinal + oxidized [NADPH--hemoprotein reductase] + 2 H2O + H(+). It participates in cofactor metabolism; retinol metabolism. It functions in the pathway lipid metabolism; fatty acid metabolism. The protein operates within steroid metabolism; cholesterol metabolism. Functionally, a cytochrome P450 monooxygenase involved in the metabolism of fatty acids, steroids and retinoids. Mechanistically, uses molecular oxygen inserting one oxygen atom into a substrate, and reducing the second into a water molecule, with two electrons provided by NADPH via cytochrome P450 reductase (NADPH--hemoprotein reductase). Catalyzes the epoxidation of double bonds of polyunsaturated fatty acids (PUFA). Metabolizes endocannabinoid arachidonoylethanolamide (anandamide) to 20-hydroxyeicosatetraenoic acid ethanolamide (20-HETE-EA) and 8,9-, 11,12-, and 14,15-epoxyeicosatrienoic acid ethanolamides (EpETrE-EAs), potentially modulating endocannabinoid system signaling. Catalyzes the hydroxylation of carbon-hydrogen bonds. Metabolizes cholesterol toward 25-hydroxycholesterol, a physiological regulator of cellular cholesterol homeostasis. Catalyzes the oxidative transformations of all-trans retinol to all-trans retinal, a precursor for the active form all-trans-retinoic acid. Also involved in the oxidative metabolism of drugs such as antiarrhythmics, adrenoceptor antagonists, and tricyclic antidepressants. The protein is Cytochrome P450 2D6 (CYP2D6) of Pan paniscus (Pygmy chimpanzee).